The sequence spans 113 residues: Large ribosomal subunit protein bL19 (113 aa).

This sequence belongs to the bacterial ribosomal protein bL19 family.

Functionally, this protein is located at the 30S-50S ribosomal subunit interface and may play a role in the structure and function of the aminoacyl-tRNA binding site. In Mycobacterium avium (strain 104), this protein is Large ribosomal subunit protein bL19.